Here is a 98-residue protein sequence, read N- to C-terminus: Conotoxin Di19A (98 aa).

An N-terminal signal peptide occupies residues 1–19 (MSTLGILLPIALLLPLANP). Positions 20–49 (AENGDGQAMPRTRNLRSLSFGRTLRRLEKR) are excised as a propeptide. Pro-53 is modified (4-hydroxyproline). Position 63 is a 4-carboxyglutamate (Glu-63). Residues Pro-68, Pro-93, and Pro-97 each carry the 4-hydroxyproline modification.

Contains 5 disulfide bonds. Expressed by the venom duct.

The protein localises to the secreted. Injection of the synthetic peptide causes a hyperexcitable phenotype in mice greater than three weeks of age at lower doses, and lethargy at higher doses. The protein is Conotoxin Di19A of Conus distans (Distant cone).